The primary structure comprises 271 residues: Peroxiredoxin-4 (271 aa).

A signal peptide spans 1–37 (MEALPLLAATTPDHGRHRRLLLLPLLLFLLPAGAVQG). One can recognise a Thioredoxin domain in the interval 79–237 (AKISKPAPYW…TLRLVQAFQY (159 aa)). The active-site Cysteine sulfenic acid (-SOH) intermediate is the Cys-124.

Belongs to the peroxiredoxin family. AhpC/Prx1 subfamily. As to quaternary structure, homodimer; disulfide-linked, upon oxidation. 5 homodimers assemble to form a ring-like decamer. Can form heterodimers with PRDX1. Post-translationally, the enzyme can be inactivated by further oxidation of the cysteine sulfenic acid (C(P)-SOH) to sulphinic acid (C(P)-SO2H) and sulphonic acid (C(P)-SO3H) instead of its condensation to a disulfide bond.

The protein resides in the cytoplasm. It is found in the endoplasmic reticulum. It carries out the reaction a hydroperoxide + [thioredoxin]-dithiol = an alcohol + [thioredoxin]-disulfide + H2O. Thiol-specific peroxidase that catalyzes the reduction of hydrogen peroxide and organic hydroperoxides to water and alcohols, respectively. Plays a role in cell protection against oxidative stress by detoxifying peroxides and as sensor of hydrogen peroxide-mediated signaling events. Regulates the activation of NF-kappa-B in the cytosol by a modulation of I-kappa-B-alpha phosphorylation. The chain is Peroxiredoxin-4 (PRDX4) from Homo sapiens (Human).